A 319-amino-acid chain; its full sequence is Ribonuclease Z (319 aa).

7 residues coordinate Zn(2+): histidine 62, histidine 64, aspartate 66, histidine 67, histidine 145, aspartate 215, and histidine 273. The active-site Proton acceptor is the aspartate 66.

This sequence belongs to the RNase Z family. As to quaternary structure, homodimer. Zn(2+) serves as cofactor.

It catalyses the reaction Endonucleolytic cleavage of RNA, removing extra 3' nucleotides from tRNA precursor, generating 3' termini of tRNAs. A 3'-hydroxy group is left at the tRNA terminus and a 5'-phosphoryl group is left at the trailer molecule.. Its function is as follows. Zinc phosphodiesterase, which displays some tRNA 3'-processing endonuclease activity. Probably involved in tRNA maturation, by removing a 3'-trailer from precursor tRNA. This Borrelia hermsii (strain HS1 / DAH) protein is Ribonuclease Z.